A 265-amino-acid polypeptide reads, in one-letter code: MSAHQARKRFGQHFLTDESVVESIVRAIGPARDDRVVEIGPGLSALTRPLLDRIDHLTAVEIDRDLAARLRRQYPAERLTVVEADALTVDFAQFGQGLRVVGNLPYNISSPLLFHLMGAAEQVRDQHFMLQREVIDRMVAEPGSGDYSRLSVMLQARYRMEKLFDVAPEAFDPPPRVVSAVVRMAPLPADRLRPASDAAFETVVARAFSQRRKMLRRVLGDWAALTPWDELGIAPTARAEEVGVAQFIGLADALLAAGAPGLARP.

His-13, Leu-15, Gly-40, Glu-61, Asp-85, and Asn-103 together coordinate S-adenosyl-L-methionine.

This sequence belongs to the class I-like SAM-binding methyltransferase superfamily. rRNA adenine N(6)-methyltransferase family. RsmA subfamily.

The protein localises to the cytoplasm. It carries out the reaction adenosine(1518)/adenosine(1519) in 16S rRNA + 4 S-adenosyl-L-methionine = N(6)-dimethyladenosine(1518)/N(6)-dimethyladenosine(1519) in 16S rRNA + 4 S-adenosyl-L-homocysteine + 4 H(+). Specifically dimethylates two adjacent adenosines (A1518 and A1519) in the loop of a conserved hairpin near the 3'-end of 16S rRNA in the 30S particle. May play a critical role in biogenesis of 30S subunits. In Bordetella bronchiseptica (strain ATCC BAA-588 / NCTC 13252 / RB50) (Alcaligenes bronchisepticus), this protein is Ribosomal RNA small subunit methyltransferase A.